Reading from the N-terminus, the 243-residue chain is tRNA (guanine-N(1)-)-methyltransferase (243 aa).

Residues Gly-108 and 127-132 each bind S-adenosyl-L-methionine; that span reads LGDFVL.

This sequence belongs to the RNA methyltransferase TrmD family. In terms of assembly, homodimer.

The protein localises to the cytoplasm. The enzyme catalyses guanosine(37) in tRNA + S-adenosyl-L-methionine = N(1)-methylguanosine(37) in tRNA + S-adenosyl-L-homocysteine + H(+). Its function is as follows. Specifically methylates guanosine-37 in various tRNAs. This is tRNA (guanine-N(1)-)-methyltransferase from Streptococcus equi subsp. zooepidemicus (strain H70).